We begin with the raw amino-acid sequence, 254 residues long: Chaperone protein PmfD (254 aa).

An N-terminal signal peptide occupies residues 1-26; it reads MNSFSTLKTLFCGSLLALSLVNTTQA.

This sequence belongs to the periplasmic pilus chaperone family.

It is found in the periplasm. Involved in the biogenesis of the PMF fimbria. In Proteus mirabilis (strain HI4320), this protein is Chaperone protein PmfD (pmfD).